The sequence spans 68 residues: Protease A inhibitor 3 (68 aa).

At Met1 the chain carries N-acetylmethionine. Over residues 1-14 the composition is skewed to polar residues; that stretch reads MNTDQQKVSEIFQS. Disordered stretches follow at residues 1 to 21 and 33 to 68; these read MNTDQQKVSEIFQSSKEKLQG and MASQDKDGKTTDADESEKHNYQEQYNKLKGAGHKKE. Positions 1–32 are inhibitory domain; sequence MNTDQQKVSEIFQSSKEKLQGDAKVVSDAFKK. A compositionally biased stretch (basic and acidic residues) spans 33–53; the sequence is MASQDKDGKTTDADESEKHNY.

Belongs to the protease inhibitor I34 family.

In terms of biological role, specific and potent inhibitor for yeast aspartic protease A (yscA). The proteinase acts as a folding template stabilizing the helical conformation in the inhibitor, which results in the potent and specific blockage of the proteolytic activity. The sequence is that of Protease A inhibitor 3 (PAI3) from Saccharomyces cerevisiae (strain ATCC 204508 / S288c) (Baker's yeast).